The primary structure comprises 114 residues: uncharacterized protein (114 aa).

Disordered stretches follow at residues 26 to 45 (GMKQKRKPASSEPTPEDALG) and 72 to 98 (PKGSEPPGRSAGLQGATERSGRPSVQA).

This is an uncharacterized protein from Homo sapiens (Human).